The following is a 620-amino-acid chain: Glutathione-regulated potassium-efflux system protein KefC (620 aa).

A run of 12 helical transmembrane segments spans residues 4–24, 26–46, 54–74, 90–110, 114–134, 149–169, 178–198, 218–238, 270–290, 294–314, 327–347, and 359–379; these read HTLM…PIAV, LGLG…PWGL, SILH…GLEL, GALQ…FLGL, VAEL…MQAM, FAVL…IPLL, LGAF…VVLL, VFSA…EEVG, GLLL…GTLV, LRIL…LWLI, WFAV…GAAQ, and ALTL…VLLT. Positions 399-518 constitute an RCK N-terminal domain; it reads QPRVIVAGFG…AGVAMPERET (120 aa). A disordered region spans residues 599 to 620; sequence QGTAEGKHTGDIADEPQVKPST.

This sequence belongs to the monovalent cation:proton antiporter 2 (CPA2) transporter (TC 2.A.37) family. KefC subfamily. Homodimer. Interacts with the regulatory subunit KefF.

It localises to the cell inner membrane. In terms of biological role, pore-forming subunit of a potassium efflux system that confers protection against electrophiles. Catalyzes K(+)/H(+) antiport. This Salmonella arizonae (strain ATCC BAA-731 / CDC346-86 / RSK2980) protein is Glutathione-regulated potassium-efflux system protein KefC.